The chain runs to 107 residues: Nucleoid-associated protein RC1_2305 (107 aa).

It belongs to the YbaB/EbfC family. In terms of assembly, homodimer.

It localises to the cytoplasm. The protein localises to the nucleoid. Functionally, binds to DNA and alters its conformation. May be involved in regulation of gene expression, nucleoid organization and DNA protection. In Rhodospirillum centenum (strain ATCC 51521 / SW), this protein is Nucleoid-associated protein RC1_2305.